The following is a 213-amino-acid chain: Ras-related protein Rab-2 (213 aa).

Positions 15, 16, 18, 19, 20, 21, 32, 33, 35, 38, 64, 119, 122, and 150 each coordinate GTP. Mg(2+) is bound at residue S20. Position 38 (T38) interacts with Mg(2+). The segment at 190 to 213 is disordered; sequence QHSPTNPSLPGAGGAAGAANSGCC. Residues C212 and C213 are each lipidated (S-geranylgeranyl cysteine).

The protein belongs to the small GTPase superfamily. Rab family. As to quaternary structure, interacts (GTP-bound form) with Vps16A and Vps39; the interaction with Vps39 is probably direct.

The protein localises to the vesicle. It is found in the cytoplasmic vesicle. The protein resides in the cell projection. Its subcellular location is the axon. It localises to the presynapse. The protein localises to the presynaptic active zone. It is found in the golgi apparatus. The protein resides in the trans-Golgi network. Its subcellular location is the perikaryon. It localises to the autophagosome membrane. The protein localises to the autolysosome membrane. The enzyme catalyses GTP + H2O = GDP + phosphate + H(+). May be involved in bidirectional endoplasmic reticulum (ER) to Golgi trafficking. Together with Rab7 involved in promoting fusion of autophagosomes and endosomes with lysosomes, probably through recruitment of the HOPS tethering complex. Involved in biosynthetic transport to lysosomes. In larval motor neurons, mediates the biogenesis of presynaptic cargo vesicles and their long-range axonal trafficking to synaptic termini. Not involved in axonal trafficking of mitochondria. During vesicle biogenesis, active zone proteins (including brp/Bruchpilot) and synaptic vesicle proteins (including VGlut) are sorted from the trans-Golgi in a Rab2-dependent manner via, at least, two independent routes. Acts upstream of Arl8 during presynaptic precursor vesicle biogenesis. Associated with lysosomal marker positive presynaptic cargo vesicles during anterograde and retrograde axonal trafficking, probably while in its GTP-bound active state. Involved in the delivery of presynaptic cargos, but not presynapse assembly or active zone function at synaptic termini. Required for autophagocytosis-dependent remodeling of myofibrils and transverse-tubules (T-tubules) during metamorphosis. This is Ras-related protein Rab-2 from Drosophila melanogaster (Fruit fly).